The following is a 943-amino-acid chain: Protein translocase subunit SecA (943 aa).

Residues glutamine 90, 108–112 (GEGKT), and aspartate 509 each bind ATP. The disordered stretch occupies residues 534–576 (KPDNEHKPPIPQQRSSKAGGGFASKSESISNKNSKSSGASLFP). Positions 556-570 (ASKSESISNKNSKSS) are enriched in low complexity.

It belongs to the SecA family. In terms of assembly, monomer and homodimer. Part of the essential Sec protein translocation apparatus which comprises SecA, SecYEG and auxiliary proteins SecDF. Other proteins may also be involved.

The protein resides in the cell inner membrane. The protein localises to the cellular thylakoid membrane. It localises to the cytoplasm. The catalysed reaction is ATP + H2O + cellular proteinSide 1 = ADP + phosphate + cellular proteinSide 2.. Its function is as follows. Part of the Sec protein translocase complex. Interacts with the SecYEG preprotein conducting channel. Has a central role in coupling the hydrolysis of ATP to the transfer of proteins into and across the cell membrane, serving as an ATP-driven molecular motor driving the stepwise translocation of polypeptide chains across the membrane. In terms of biological role, probably participates in protein translocation into and across both the cytoplasmic and thylakoid membranes in cyanobacterial cells. The chain is Protein translocase subunit SecA from Prochlorococcus marinus (strain MIT 9515).